A 191-amino-acid chain; its full sequence is GTP-dependent dephospho-CoA kinase (191 aa).

Positions 46, 65, 67, and 122 each coordinate GTP.

Belongs to the GTP-dependent DPCK family.

It carries out the reaction 3'-dephospho-CoA + GTP = GDP + CoA + H(+). Its pathway is cofactor biosynthesis; coenzyme A biosynthesis. In terms of biological role, catalyzes the GTP-dependent phosphorylation of the 3'-hydroxyl group of dephosphocoenzyme A to form coenzyme A (CoA). This chain is GTP-dependent dephospho-CoA kinase, found in Methanopyrus kandleri (strain AV19 / DSM 6324 / JCM 9639 / NBRC 100938).